Here is a 917-residue protein sequence, read N- to C-terminus: Autophagy-related protein 9 (917 aa).

Residues 1 to 226 lie on the Cytoplasmic side of the membrane; the sequence is MASNIFSRLV…AGFWCIIVQR (226 aa). 2 disordered regions span residues 16–37 and 119–177; these read RSFY…RAGI and LLLS…QGRP. A helical transmembrane segment spans residues 227–247; it reads ILELVNAAFVAVFLTFLSQCV. The Lumenal portion of the chain corresponds to 248 to 275; that stretch reads DYHKLPHSKKMEDIIIPKCTQNMSLVWN. Residue N269 is glycosylated (N-linked (GlcNAc...) asparagine). Residues 276–296 traverse the membrane as a helical segment; that stretch reads VGLWLFAIYFICRCFGLIIQL. The Cytoplasmic segment spans residues 297–442; sequence RQLKHLRDFY…RQLSQKLKSR (146 aa). An intramembrane segment occupies 443–463; it reads FFFAGLMIFVMSPFIALYLIL. Residues 464–539 lie on the Cytoplasmic side of the membrane; that stretch reads VYFLTYFHEF…ARTVSFITGS (76 aa). A helical membrane pass occupies residues 540-560; it reads IVAVLGLATIFDSEAFLTFEI. The Lumenal segment spans residues 561 to 564; the sequence is TPDR. The chain crosses the membrane as a helical span at residues 565 to 585; the sequence is SVLFYVSILATLWAVARGNIS. Residues 586-633 lie on the Cytoplasmic side of the membrane; that stretch reads DDNEVYDPEFAMKSIIEFTHYEPDHWRGRLHSTEVKNEFSELYKPRPQ. N6-acetyllysine is present on K621. Residues 634 to 654 lie within the membrane without spanning it; sequence IFLEEILSILLTPLVLLVSLP. At 655 to 917 the chain is on the cytoplasmic side; that stretch reads NSTDQIVDFF…FQQAHMHLRR (263 aa). The segment at 854 to 895 is disordered; that stretch reads DARFGKLGDEDIDESGGALDESTWQTSPTKTLSRENSGANPQ. A compositionally biased stretch (polar residues) spans 875 to 895; the sequence is STWQTSPTKTLSRENSGANPQ.

Belongs to the ATG9 family. As to quaternary structure, homotrimer; forms a homotrimer with a central pore that forms a path between the two membrane leaflets. Interacts with HAT1. Post-translationally, acetylated by HAT1 at Lys-621, which increases the ability to bind vesicles during nutrient starvation induction. Phosphorylated by ATG1. ATG1 phosphorylation is required for preautophagosome elongation.

It is found in the preautophagosomal structure membrane. Its subcellular location is the cytoplasmic vesicle membrane. The protein resides in the vacuole membrane. The protein localises to the golgi apparatus membrane. It localises to the endoplasmic reticulum membrane. It catalyses the reaction a 1,2-diacyl-sn-glycero-3-phosphocholine(in) = a 1,2-diacyl-sn-glycero-3-phosphocholine(out). The catalysed reaction is a 1,2-diacyl-sn-glycero-3-phospho-L-serine(in) = a 1,2-diacyl-sn-glycero-3-phospho-L-serine(out). The enzyme catalyses a 1,2-diacyl-sn-glycero-3-phosphoethanolamine(in) = a 1,2-diacyl-sn-glycero-3-phosphoethanolamine(out). It carries out the reaction a 1,2-diacyl-sn-glycero-3-phospho-(1D-myo-inositol-3-phosphate)(in) = a 1,2-diacyl-sn-glycero-3-phospho-(1D-myo-inositol-3-phosphate)(out). Phospholipid scramblase involved in autophagy and cytoplasm to vacuole transport (Cvt) vesicle formation. Cycles between the preautophagosomal structure/phagophore assembly site (PAS) and the cytoplasmic vesicle pool and supplies membrane for the growing autophagosome. Lipid scramblase activity plays a key role in preautophagosomal structure/phagophore assembly by distributing the phospholipids that arrive through ATG2 from the cytoplasmic to the luminal leaflet of the bilayer, thereby driving autophagosomal membrane expansion. Required for mitophagy. Also involved in endoplasmic reticulum-specific autophagic process and is essential for the survival of cells subjected to severe ER stress. Different machineries are required for anterograde trafficking to the PAS during either the Cvt pathway or bulk autophagy and for retrograde trafficking. Plays a role in appressorium formation and pathogenicity. This chain is Autophagy-related protein 9, found in Pyricularia oryzae (strain 70-15 / ATCC MYA-4617 / FGSC 8958) (Rice blast fungus).